Consider the following 187-residue polypeptide: Orotate phosphoribosyltransferase (187 aa).

110-118 serves as a coordination point for 5-phospho-alpha-D-ribose 1-diphosphate; that stretch reads EDVVTTGGS. Orotate-binding residues include Thr-114 and Arg-142.

Belongs to the purine/pyrimidine phosphoribosyltransferase family. PyrE subfamily. As to quaternary structure, homodimer. Requires Mg(2+) as cofactor.

The catalysed reaction is orotidine 5'-phosphate + diphosphate = orotate + 5-phospho-alpha-D-ribose 1-diphosphate. It participates in pyrimidine metabolism; UMP biosynthesis via de novo pathway; UMP from orotate: step 1/2. In terms of biological role, catalyzes the transfer of a ribosyl phosphate group from 5-phosphoribose 1-diphosphate to orotate, leading to the formation of orotidine monophosphate (OMP). This is Orotate phosphoribosyltransferase from Thermotoga neapolitana (strain ATCC 49049 / DSM 4359 / NBRC 107923 / NS-E).